Consider the following 72-residue polypeptide: UPF0495 protein KLLA0D04334g (72 aa).

A helical transmembrane segment spans residues 20–42 (PVELTPLFLAMGVALASGTWFSY).

The protein belongs to the UPF0495 family.

It localises to the membrane. The polypeptide is UPF0495 protein KLLA0D04334g (Kluyveromyces lactis (strain ATCC 8585 / CBS 2359 / DSM 70799 / NBRC 1267 / NRRL Y-1140 / WM37) (Yeast)).